Reading from the N-terminus, the 309-residue chain is Aspartate carbamoyltransferase catalytic subunit (309 aa).

Residues arginine 58 and threonine 59 each contribute to the carbamoyl phosphate site. Lysine 86 is a binding site for L-aspartate. Positions 108, 136, and 139 each coordinate carbamoyl phosphate. Arginine 170 and arginine 224 together coordinate L-aspartate. Carbamoyl phosphate is bound by residues glycine 266 and proline 267.

This sequence belongs to the aspartate/ornithine carbamoyltransferase superfamily. ATCase family. Heterododecamer (2C3:3R2) of six catalytic PyrB chains organized as two trimers (C3), and six regulatory PyrI chains organized as three dimers (R2).

It catalyses the reaction carbamoyl phosphate + L-aspartate = N-carbamoyl-L-aspartate + phosphate + H(+). It functions in the pathway pyrimidine metabolism; UMP biosynthesis via de novo pathway; (S)-dihydroorotate from bicarbonate: step 2/3. Functionally, catalyzes the condensation of carbamoyl phosphate and aspartate to form carbamoyl aspartate and inorganic phosphate, the committed step in the de novo pyrimidine nucleotide biosynthesis pathway. The polypeptide is Aspartate carbamoyltransferase catalytic subunit (Campylobacter curvus (strain 525.92)).